The chain runs to 422 residues: Putative polyketide beta-ketoacyl synthase 1 (422 aa).

In terms of domain architecture, Ketosynthase family 3 (KS3) spans 2–416 (SRRVVVTGIG…GFQSAVVLTG (415 aa)). Active-site for beta-ketoacyl synthase activity residues include cysteine 169, histidine 309, and histidine 346.

Belongs to the thiolase-like superfamily. Beta-ketoacyl-ACP synthases family.

Involved in developmentally regulated synthesis of a compound biosynthetically related to polyketide antibiotics which is essential for spore color in Streptomyces halstedii. The chain is Putative polyketide beta-ketoacyl synthase 1 (sch1) from Streptomyces halstedii.